We begin with the raw amino-acid sequence, 562 residues long: Matrix metalloproteinase-25 (562 aa).

An N-terminal signal peptide occupies residues 1–21 (MRLRLRLLALLLLLLAPPARA). Residues 22 to 107 (PKPSAQDVSL…VAGLVRRRRR (86 aa)) constitute a propeptide that is removed on maturation. A Cysteine switch motif is present at residues 88–95 (PRCSLPDV). Residues Cys90 and His233 each coordinate Zn(2+). Residue Glu234 is part of the active site. Residues His237 and His243 each coordinate Zn(2+). The segment at 278-313 (LYGKAPQTPYDKPTRKPLAPPPQPPASPTHSPSFPI) is disordered. The span at 295–304 (LAPPPQPPAS) shows a compositional bias: pro residues. Hemopexin repeat units lie at residues 314–363 (PDRC…WEGL), 367–412 (VRVV…GLPP), 413–461 (GEEV…EGAP), and 462–508 (PSPD…WLDC). Cys317 and Cys508 are joined by a disulfide. The disordered stretch occupies residues 490–526 (SIKTEPDAPQPMGPNWLDCPAPSSGPRAPRPPKATPV). Ala539 carries GPI-anchor amidated alanine lipidation. A propeptide spans 540–562 (AGRWPAPIPLLLLPLLVGGVASR) (removed in mature form).

It belongs to the peptidase M10A family. It depends on Zn(2+) as a cofactor. The cofactor is Ca(2+). The precursor is cleaved by a furin endopeptidase. In terms of tissue distribution, expressed predominantly in leukocytes, lung and spleen. Expressed also in colon carcinoma, astrocytoma and glioblastomas.

It is found in the cell membrane. The protein localises to the secreted. The protein resides in the extracellular space. It localises to the extracellular matrix. Functionally, may activate progelatinase A. This Homo sapiens (Human) protein is Matrix metalloproteinase-25 (MMP25).